Consider the following 121-residue polypeptide: Large ribosomal subunit protein bL12 (121 aa).

This sequence belongs to the bacterial ribosomal protein bL12 family. As to quaternary structure, homodimer. Part of the ribosomal stalk of the 50S ribosomal subunit. Forms a multimeric L10(L12)X complex, where L10 forms an elongated spine to which 2 to 4 L12 dimers bind in a sequential fashion. Binds GTP-bound translation factors.

Functionally, forms part of the ribosomal stalk which helps the ribosome interact with GTP-bound translation factors. Is thus essential for accurate translation. In Lactococcus lactis subsp. cremoris (strain MG1363), this protein is Large ribosomal subunit protein bL12.